Here is a 190-residue protein sequence, read N- to C-terminus: dTTP/UTP pyrophosphatase (190 aa).

Aspartate 69 serves as the catalytic Proton acceptor.

Belongs to the Maf family. YhdE subfamily. A divalent metal cation is required as a cofactor.

Its subcellular location is the cytoplasm. The catalysed reaction is dTTP + H2O = dTMP + diphosphate + H(+). It catalyses the reaction UTP + H2O = UMP + diphosphate + H(+). Functionally, nucleoside triphosphate pyrophosphatase that hydrolyzes dTTP and UTP. May have a dual role in cell division arrest and in preventing the incorporation of modified nucleotides into cellular nucleic acids. The sequence is that of dTTP/UTP pyrophosphatase from Sphingopyxis alaskensis (strain DSM 13593 / LMG 18877 / RB2256) (Sphingomonas alaskensis).